A 479-amino-acid chain; its full sequence is Acetylcholine receptor subunit alpha-type acr-15 (479 aa).

The signal sequence occupies residues 1 to 18 (MLLPILLHFLLLITQLNG). Over 19–230 (SPAEVRLIND…HLRRRTLYYS (212 aa)) the chain is Extracellular. N-linked (GlcNAc...) asparagine glycans are attached at residues Asn60 and Asn92. Cys146 and Cys160 are joined by a disulfide. N-linked (GlcNAc...) asparagine glycosylation is present at Asn200. An intrachain disulfide couples Cys208 to Cys209. Residues 231 to 251 (FNLIAPVLLTMILVILGFTVS) traverse the membrane as a helical segment. The Cytoplasmic segment spans residues 252-257 (PETCEK). A helical membrane pass occupies residues 258–278 (VGLQISVSLAICIFLTIMSEL). Residues 279–285 (TPQTSEA) are Extracellular-facing. The chain crosses the membrane as a helical span at residues 286-306 (VPLLGVFFHTCNFISVLATSF). The Cytoplasmic segment spans residues 307 to 453 (TVYVQSFHFR…WRFAAIVVDR (147 aa)). A helical membrane pass occupies residues 454–474 (LCLLAFSLLIVVVSIIIALRA). At 475-479 (PYLFA) the chain is on the extracellular side.

It belongs to the ligand-gated ion channel (TC 1.A.9) family. Acetylcholine receptor (TC 1.A.9.1) subfamily. As to expression, expressed in interneurons, motor neurons, pharyngeal neurons and muscles.

Its subcellular location is the cell membrane. It localises to the postsynaptic cell membrane. After binding acetylcholine, the AChR responds by an extensive change in conformation that affects all subunits and leads to opening of an ion-conducting channel across the plasma membrane. Activity is required in glutamatergic neurons to mediate nicotine-induced and nicotine-motivated behaviors. The chain is Acetylcholine receptor subunit alpha-type acr-15 from Caenorhabditis elegans.